A 669-amino-acid polypeptide reads, in one-letter code: MWARCVNLAWGLLTSRMNLTRLKPCFDNLDGVFGIENSGHHKNSSNVLMLALGALGVVFGDIGTSPLYALKECFGHYGLAPTPENVIGILSLIFWTLVLAICIKYMAFVLRADNKGEGGILSLMALAVRSQQSKDVSRRRWTMTIIGLFGAALLYGDGIITPAISVLSAMEGLTLVAPQFSPYIIPLTIFVMNALFLMQKYGTARIGVIFGPILLIWFTVLGLLGIRGMAKNLHVFEALLPHHGIEFLMNNGMAGFLVLGSVFLVVTGGEALYADMGHFGKRPIRLAWFFVALPALVLNYFGQGALLLNNPEAVSNPFYMLAPKWALLPMVMLSTMATVIASQALITGVFSITRQAIQLGFCPRVNIIHTSSQEIGQIYIPIVNWSMFIGVIWLVLTFKTSSNLAAAYGIAVTGATMITTILAFEVARQKWKWSLLKSSAIFGSFLVMDLAFFGANVHKIPHGGWVPLVIGAIIYLLMTTWQKGRQILFRRLKERSMPIEDFCQKLLREPPLRAPGTAIYMAGDPWGVPAPLLHNMKHNKVLHQRVAILTIQTKEVPFVSKRDRISIQEVIPNIYRIIANYGFMEIPKMKHILEACRQRDINFNVNETTFVLGRETIIAEKGPNRPGEAGMAHWRERLFAIMSKNAQRPTAFFRIPPNQVIEVGIQVEI.

The next 12 membrane-spanning stretches (helical) occupy residues 47 to 67 (VLML…TSPL), 86 to 106 (VIGI…IKYM), 144 to 164 (TIIG…TPAI), 172 to 192 (GLTL…IFVM), 206 to 226 (IGVI…LLGI), 252 to 272 (GMAG…GEAL), 288 to 308 (WFFV…ALLL), 326 to 346 (ALLP…QALI), 378 to 398 (IYIP…VLTF), 404 to 424 (LAAA…ILAF), 435 to 455 (LLKS…FFGA), and 460 to 480 (IPHG…LMTT).

It belongs to the HAK/KUP transporter (TC 2.A.72) family.

It localises to the cell inner membrane. The catalysed reaction is K(+)(in) + H(+)(in) = K(+)(out) + H(+)(out). In terms of biological role, transport of potassium into the cell. Likely operates as a K(+):H(+) symporter. This Bdellovibrio bacteriovorus (strain ATCC 15356 / DSM 50701 / NCIMB 9529 / HD100) protein is Probable potassium transport system protein Kup.